A 259-amino-acid chain; its full sequence is Putative carbamate hydrolase RutD (259 aa).

Belongs to the AB hydrolase superfamily. Hydrolase RutD family.

It carries out the reaction carbamate + 2 H(+) = NH4(+) + CO2. Its function is as follows. Involved in pyrimidine catabolism. May facilitate the hydrolysis of carbamate, a reaction that can also occur spontaneously. The polypeptide is Putative carbamate hydrolase RutD (Pseudomonas syringae pv. syringae (strain B728a)).